The chain runs to 592 residues: NADH-quinone oxidoreductase subunit C/D (592 aa).

The NADH dehydrogenase I subunit C stretch occupies residues 1-183 (MLTEFNSIPA…GPYILTEEKE (183 aa)). Residues 207–592 (DFMFLNLGPN…IDFVMADVDR (386 aa)) are NADH dehydrogenase I subunit D.

The protein in the N-terminal section; belongs to the complex I 30 kDa subunit family. It in the C-terminal section; belongs to the complex I 49 kDa subunit family. As to quaternary structure, NDH-1 is composed of 13 different subunits. Subunits NuoB, CD, E, F, and G constitute the peripheral sector of the complex.

It is found in the cell inner membrane. It carries out the reaction a quinone + NADH + 5 H(+)(in) = a quinol + NAD(+) + 4 H(+)(out). Functionally, NDH-1 shuttles electrons from NADH, via FMN and iron-sulfur (Fe-S) centers, to quinones in the respiratory chain. The immediate electron acceptor for the enzyme in this species is believed to be ubiquinone. Couples the redox reaction to proton translocation (for every two electrons transferred, four hydrogen ions are translocated across the cytoplasmic membrane), and thus conserves the redox energy in a proton gradient. The chain is NADH-quinone oxidoreductase subunit C/D from Acidiphilium cryptum (strain JF-5).